We begin with the raw amino-acid sequence, 80 residues long: MDVKHIKDYLSWLYYQYLLITCSYVLEPWEQSIFNTLLLTIIAMVIYSSYIFIPIHVRLAVEFFSRIFGGQHESTVALMS.

The Cytoplasmic portion of the chain corresponds to 1-11; it reads MDVKHIKDYLS. Residues 12-29 traverse the membrane as a helical segment; the sequence is WLYYQYLLITCSYVLEPW. Residues 30–36 are Lumenal-facing; the sequence is EQSIFNT. Residues 37-57 traverse the membrane as a helical segment; the sequence is LLLTIIAMVIYSSYIFIPIHV. Residues 58 to 80 lie on the Cytoplasmic side of the membrane; that stretch reads RLAVEFFSRIFGGQHESTVALMS.

Belongs to the SPTSS family. SPTSSB subfamily. As to quaternary structure, component of the serine palmitoyltransferase (SPT) complex, which is composed of SPTLC1, SPTLC2 or SPTLC3 and SPTSSA or SPTSSB. The heterodimer consisting of SPTLC1 and SPTLC2/SPTLC3 forms the catalytic core of the enzyme, while SPTSSA or SPTSSB subunits determine substrate specificity. SPT also interacts with ORMDL proteins, especially ORMDL3, which negatively regulate SPT activity in the presence of ceramides.

Its subcellular location is the endoplasmic reticulum membrane. The protein operates within lipid metabolism; sphingolipid metabolism. Its function is as follows. Component of the serine palmitoyltransferase multisubunit enzyme (SPT) that catalyzes the initial and rate-limiting step in sphingolipid biosynthesis by condensing L-serine and activated acyl-CoA (most commonly palmitoyl-CoA) to form long-chain bases. The SPT complex is composed of SPTLC1, SPTLC2 or SPTLC3 and SPTSSA or SPTSSB. Within this complex, the heterodimer consisting of SPTLC1 and SPTLC2/SPTLC3 forms the catalytic core. Within the SPT complex, SPTSSB stimulates the catalytic activity and plays a role in substrate specificity. SPT complexes with this subunit showing a preference for longer acyl-CoAs. The SPTLC1-SPTLC2-SPTSSB complex shows a strong preference for C18-CoA substrate, while the SPTLC1-SPTLC3-SPTSSB isozyme displays an ability to use a broader range of acyl-CoAs, without apparent preference. This is Serine palmitoyltransferase small subunit B (sptssb) from Xenopus laevis (African clawed frog).